Consider the following 717-residue polypeptide: Mitotic spindle assembly checkpoint protein MAD1 (717 aa).

N-acetylmethionine is present on Met-1. Phosphoserine is present on Ser-16. Residues 46–631 (EQSMQLEERA…QTKIQEFRKV (586 aa)) adopt a coiled-coil conformation. At Lys-61 the chain carries N6-acetyllysine; alternate. A Glycyl lysine isopeptide (Lys-Gly) (interchain with G-Cter in SUMO2); alternate cross-link involves residue Lys-61. The short motif at 79–82 (KRAR) is the Nuclear localization signal element. 2 positions are modified to phosphoserine: Ser-214 and Ser-428. The necessary for interaction with NEK2 stretch occupies residues 380 to 532 (LLEERKKREI…EMQMERLTLQ (153 aa)). The interval 540-551 (TKVLHMSLNPAS) is necessary for interaction with MAD2L1.

It belongs to the MAD1 family. In terms of assembly, homodimer. Dimerizes via its N- and C- terminal regions. Heterodimerizes with MAD2L1 in order to form a tetrameric MAD1L1-MAD2L1 core complex. Interacts with the closed conformation form of MAD2L1 (C-MAD2) and open conformation form of MAD2L1 (O-MAD2). It is unclear whether MAD1L1 dimerization promotes the conversion of closed to open conformation of MAD2L1. Formation of a heterotetrameric core complex containing two molecules each of MAD1L1 and of MAD2L1 promotes binding of another molecule of MAD2L1 to each MAD2L1, resulting in a heterohexamer. Perturbation of the original MAD1L1-MAD2L1 structure by the spindle checkpoint may decrease MAD2L1 affinity for MAD1L1. CDC20 can compete with MAD1L1 for MAD2L1 binding, until the attachment and/or tension dampen the checkpoint signal, preventing further release of MAD2L1 on to CDC20. Also able to interact with the BUB1/BUB3 complex. Interacts with NEK2. Interacts with TTK. Interacts with TPR; the interactions occurs in a microtubule-independent manner. Interacts with IK. Interacts with the viral Tax protein. Interacts with PRAP1. In terms of processing, phosphorylated; by BUB1. Become hyperphosphorylated in late S through M phases or after mitotic spindle damage.

It is found in the nucleus. Its subcellular location is the chromosome. The protein localises to the centromere. The protein resides in the kinetochore. It localises to the nucleus envelope. It is found in the cytoplasm. Its subcellular location is the cytoskeleton. The protein localises to the microtubule organizing center. The protein resides in the centrosome. It localises to the spindle. It is found in the spindle pole. In terms of biological role, component of the spindle-assembly checkpoint that prevents the onset of anaphase until all chromosomes are properly aligned at the metaphase plate. Forms a heterotetrameric complex with the closed conformation form of MAD2L1 (C-MAD2) at unattached kinetochores during prometaphase, recruits an open conformation of MAD2L1 (O-MAD2) and promotes the conversion of O-MAD2 to C-MAD2, which ensures mitotic checkpoint signaling. This Cricetulus griseus (Chinese hamster) protein is Mitotic spindle assembly checkpoint protein MAD1 (MAD1L1).